The following is a 651-amino-acid chain: Tudor domain-containing protein 3 (651 aa).

Residues 193 to 233 form the UBA domain; the sequence is LVDEKALKHITEMGFSKEASRQALMDNGNNLEAALNVLLTS. Disordered stretches follow at residues 234 to 271, 287 to 369, and 381 to 450; these read NKQKPVMGPPLRGRGKGRGRIRSEDEEDLGNARPSAPS, EEPK…VSEV, and YSRY…TSIP. Ser-256 bears the Phosphoserine mark. The span at 291–312 shows a compositional bias: polar residues; it reads SQPQQLHQGQYRSSNTEQNGVK. Basic and acidic residues predominate over residues 313–338; sequence DNNHLRHPPRNDTRQPRNEKPPRFQR. Ser-345 is modified (phosphoserine). Lys-470 participates in a covalent cross-link: Glycyl lysine isopeptide (Lys-Gly) (interchain with G-Cter in SUMO2). In terms of domain architecture, Tudor spans 555–615; that stretch reads MWKPGDECFA…KPIQTEAWEE (61 aa). Residues 624–633 show a composition bias toward basic and acidic residues; the sequence is EFRRGGDGQP. The segment at 624–651 is disordered; that stretch reads EFRRGGDGQPRRSTRPTQQFYQPPRARN. Residues 631-651 are EBM motif; may mediate interaction with the EJC; the sequence is GQPRRSTRPTQQFYQPPRARN.

As to quaternary structure, component of mRNA stress granules. Interacts with FMR1, FXR1, FXR2, EWSR1, FUS, SERBP1, EEF1A1 and DDX3X or DDX3Y, and with the small nuclear ribonucleoprotein-associated proteins SNRPB and SNRPN. Interacts with 'Lys-48'-linked tetra-ubiquitin, but not with monoubiquitin or 'Lys-63'-linked ubiquitin chains. May interact with the exon junction complex (EJC) composed at least of CASC3, EIF4A3, MAGOH and RBM8A. Interacts with POLR2A (via the C-terminal domain (CTD)). Post-translationally, probably cleaved by enteroviral 2A proteinase. As to expression, detected in heart, brain, placenta, lung, liver, skeletal muscle, kidney and pancreas.

Its subcellular location is the cytoplasm. The protein localises to the nucleus. Functionally, scaffolding protein that specifically recognizes and binds dimethylarginine-containing proteins. Plays a role in the regulation of translation of target mRNAs by binding Arg/Gly-rich motifs (GAR) in dimethylarginine-containing proteins. In nucleus, acts as a coactivator: recognizes and binds asymmetric dimethylation on the core histone tails associated with transcriptional activation (H3R17me2a and H4R3me2a) and recruits proteins at these arginine-methylated loci. In cytoplasm, acts as an antiviral factor that participates in the assembly of stress granules together with G3BP1. This is Tudor domain-containing protein 3 (TDRD3) from Homo sapiens (Human).